Consider the following 178-residue polypeptide: Large ribosomal subunit protein uL6 (178 aa).

This sequence belongs to the universal ribosomal protein uL6 family. Part of the 50S ribosomal subunit.

This protein binds to the 23S rRNA, and is important in its secondary structure. It is located near the subunit interface in the base of the L7/L12 stalk, and near the tRNA binding site of the peptidyltransferase center. This is Large ribosomal subunit protein uL6 from Campylobacter curvus (strain 525.92).